The sequence spans 420 residues: Exodeoxyribonuclease 7 large subunit (420 aa).

Belongs to the XseA family. In terms of assembly, heterooligomer composed of large and small subunits.

It is found in the cytoplasm. It carries out the reaction Exonucleolytic cleavage in either 5'- to 3'- or 3'- to 5'-direction to yield nucleoside 5'-phosphates.. In terms of biological role, bidirectionally degrades single-stranded DNA into large acid-insoluble oligonucleotides, which are then degraded further into small acid-soluble oligonucleotides. This Helicobacter pylori (strain Shi470) protein is Exodeoxyribonuclease 7 large subunit.